A 744-amino-acid chain; its full sequence is Catalase A (744 aa).

Residues H93 and N166 contribute to the active site. Y380 contributes to the heme binding site.

It belongs to the catalase family. The cofactor is heme.

It localises to the peroxisome matrix. It carries out the reaction 2 H2O2 = O2 + 2 H2O. Its function is as follows. Catalyzes the degradation of hydrogen peroxide (H(2)O(2)) generated by peroxisomal oxidases to water and oxygen, thereby protecting cells from the toxic effects of hydrogen peroxide. The polypeptide is Catalase A (catA) (Emericella nidulans (strain FGSC A4 / ATCC 38163 / CBS 112.46 / NRRL 194 / M139) (Aspergillus nidulans)).